The following is a 344-amino-acid chain: Cyclin-G2 (344 aa).

Residues 298 to 324 (CFDGSESEDSGEDMSCGEESLSSSPPS) are disordered. Positions 302-313 (SESEDSGEDMSC) are enriched in acidic residues.

It belongs to the cyclin family. Cyclin G subfamily. Highest levels in intestine. Intermediate levels in spleen, brain and kidney. Low levels in testis, stomach, pancreas, liver, salivary gland and muscle. According to PubMed:9139721 also abundant in thymus.

Its subcellular location is the cytoplasm. The protein resides in the nucleus. May play a role in growth regulation and in negative regulation of cell cycle progression. The sequence is that of Cyclin-G2 (Ccng2) from Mus musculus (Mouse).